The primary structure comprises 485 residues: NADH-quinone oxidoreductase subunit N (485 aa).

The next 14 helical transmembrane spans lie at 8 to 28 (LIAL…MLSI), 35 to 55 (FINT…LYFV), 75 to 95 (LYIG…YSWL), 104 to 124 (EFYL…CANH), 125 to 145 (LASL…LIGY), 159 to 179 (YMLL…LLYA), 203 to 223 (ILSG…LVPF), 235 to 255 (PAPV…AVVI), 271 to 291 (TVLT…ALTQ), 297 to 317 (LLGY…VAVQ), 326 to 346 (VGIY…VVSL), 383 to 403 (LAGI…VLGV), 406 to 426 (ELWW…YYYL), and 455 to 475 (MVVL…QPLI).

The protein belongs to the complex I subunit 2 family. As to quaternary structure, NDH-1 is composed of 13 different subunits. Subunits NuoA, H, J, K, L, M, N constitute the membrane sector of the complex.

The protein localises to the cell inner membrane. It carries out the reaction a quinone + NADH + 5 H(+)(in) = a quinol + NAD(+) + 4 H(+)(out). NDH-1 shuttles electrons from NADH, via FMN and iron-sulfur (Fe-S) centers, to quinones in the respiratory chain. The immediate electron acceptor for the enzyme in this species is believed to be ubiquinone. Couples the redox reaction to proton translocation (for every two electrons transferred, four hydrogen ions are translocated across the cytoplasmic membrane), and thus conserves the redox energy in a proton gradient. The chain is NADH-quinone oxidoreductase subunit N from Photorhabdus laumondii subsp. laumondii (strain DSM 15139 / CIP 105565 / TT01) (Photorhabdus luminescens subsp. laumondii).